The chain runs to 294 residues: Octopine-binding periplasmic protein (294 aa).

A signal peptide spans 1-20 (MRLKSIMCAALFVVAGQAAA). Cysteine 57 and cysteine 64 are joined by a disulfide.

Belongs to the bacterial solute-binding protein 3 family.

It is found in the periplasm. Functionally, component of the octopine active transport system probably consisting of four subunits: Q, M, P and T. This Rhizobium meliloti (Ensifer meliloti) protein is Octopine-binding periplasmic protein (occT).